The following is a 188-amino-acid chain: Elongation factor P (188 aa).

An N6-(3,6-diaminohexanoyl)-5-hydroxylysine modification is found at lysine 34.

Belongs to the elongation factor P family. In terms of processing, may be beta-lysylated on the epsilon-amino group of Lys-34 by the combined action of EpmA and EpmB, and then hydroxylated on the C5 position of the same residue by EpmC (if this protein is present). Lysylation is critical for the stimulatory effect of EF-P on peptide-bond formation. The lysylation moiety may extend toward the peptidyltransferase center and stabilize the terminal 3-CCA end of the tRNA. Hydroxylation of the C5 position on Lys-34 may allow additional potential stabilizing hydrogen-bond interactions with the P-tRNA.

The protein localises to the cytoplasm. It participates in protein biosynthesis; polypeptide chain elongation. Involved in peptide bond synthesis. Alleviates ribosome stalling that occurs when 3 or more consecutive Pro residues or the sequence PPG is present in a protein, possibly by augmenting the peptidyl transferase activity of the ribosome. Modification of Lys-34 is required for alleviation. The protein is Elongation factor P of Pectobacterium carotovorum subsp. carotovorum (strain PC1).